Reading from the N-terminus, the 469-residue chain is Phosphatidylinositol 4-kinase type 2-alpha (469 aa).

2 disordered regions span residues 1-30 and 50-72; these read MDETSPLVSPDRDQTEYSYQSQCSPGATVP and TATSCGSAASGPSPPGSPCDQER. Residues 16–25 are compositionally biased toward polar residues; it reads EYSYQSQCSP. Low complexity predominate over residues 50-60; the sequence is TATSCGSAASG. The 329-residue stretch at 115–443 folds into the PI3K/PI4K catalytic domain; that stretch reads DILPERISQG…VQTPPVIVET (329 aa). A G-loop region spans residues 121-127; it reads ISQGSSG. ATP-binding positions include 122–128 and lysine 143; that span reads SQGSSGS. Positions 148–150 are important for substrate binding; that stretch reads EPY. The segment at 156-169 is important for interaction with membranes; that stretch reads KWTKWLQKLCCPCC. 4 S-palmitoyl cysteine lipidation sites follow: cysteine 165, cysteine 166, cysteine 168, and cysteine 169. Residue 252–255 coordinates ATP; it reads QIFV. Residues 259 to 267 form an important for interaction with membranes region; sequence KDADYWLRR. Residues 296–304 form a catalytic loop region; sequence RNTDRGNDN. Residues 334–354 are activation loop; it reads AIDNGLAFPLKHPDSWRAYPF. Aspartate 336 is a binding site for ATP. Residues 349-358 are important for interaction with membranes; that stretch reads WRAYPFYWAW.

This sequence belongs to the PI3/PI4-kinase family. Type II PI4K subfamily.

It is found in the golgi apparatus. The protein localises to the trans-Golgi network membrane. The protein resides in the membrane raft. It localises to the endosome. Its subcellular location is the endosome membrane. It is found in the cytoplasmic vesicle. The protein localises to the cell projection. The protein resides in the dendrite. It localises to the presynaptic cell membrane. Its subcellular location is the synapse. It is found in the synaptosome. The protein localises to the mitochondrion. The protein resides in the membrane. It localises to the cell membrane. Its subcellular location is the perikaryon. It is found in the neuron projection. It carries out the reaction a 1,2-diacyl-sn-glycero-3-phospho-(1D-myo-inositol) + ATP = a 1,2-diacyl-sn-glycero-3-phospho-(1D-myo-inositol 4-phosphate) + ADP + H(+). Functionally, membrane-bound phosphatidylinositol-4 kinase (PI4-kinase) that catalyzes the phosphorylation of phosphatidylinositol (PI) to phosphatidylinositol 4-phosphate (PI4P), a lipid that plays important roles in endocytosis, Golgi function, protein sorting and membrane trafficking. Besides, phosphorylation of phosphatidylinositol (PI) to phosphatidylinositol 4-phosphate (PI4P) is the first committed step in the generation of phosphatidylinositol 4,5-bisphosphate (PIP2), a precursor of the second messenger inositol 1,4,5-trisphosphate (InsP3). This Xenopus laevis (African clawed frog) protein is Phosphatidylinositol 4-kinase type 2-alpha (pi4k2a).